The primary structure comprises 670 residues: DNA ligase (670 aa).

NAD(+)-binding positions include 33 to 37, 82 to 83, and Glu114; these read DVEYD and SL. Residue Lys116 is the N6-AMP-lysine intermediate of the active site. 4 residues coordinate NAD(+): Arg137, Glu174, Lys291, and Lys315. Zn(2+) is bound by residues Cys409, Cys412, Cys427, and Cys433. The 78-residue stretch at 593–670 folds into the BRCT domain; that stretch reads DQELPLEGKV…TEEDLIALIS (78 aa).

Belongs to the NAD-dependent DNA ligase family. LigA subfamily. Requires Mg(2+) as cofactor. Mn(2+) is required as a cofactor.

It catalyses the reaction NAD(+) + (deoxyribonucleotide)n-3'-hydroxyl + 5'-phospho-(deoxyribonucleotide)m = (deoxyribonucleotide)n+m + AMP + beta-nicotinamide D-nucleotide.. Its function is as follows. DNA ligase that catalyzes the formation of phosphodiester linkages between 5'-phosphoryl and 3'-hydroxyl groups in double-stranded DNA using NAD as a coenzyme and as the energy source for the reaction. It is essential for DNA replication and repair of damaged DNA. The polypeptide is DNA ligase (Vibrio atlanticus (strain LGP32) (Vibrio splendidus (strain Mel32))).